Here is a 175-residue protein sequence, read N- to C-terminus: Inorganic pyrophosphatase (175 aa).

Positions 29, 43, and 55 each coordinate substrate. Residues Asp-65, Asp-70, and Asp-102 each contribute to the Mg(2+) site. Residue Tyr-141 participates in substrate binding.

It belongs to the PPase family. As to quaternary structure, homohexamer. Mg(2+) serves as cofactor.

Its subcellular location is the cytoplasm. It catalyses the reaction diphosphate + H2O = 2 phosphate + H(+). Catalyzes the hydrolysis of inorganic pyrophosphate (PPi) forming two phosphate ions. In Rickettsia bellii (strain RML369-C), this protein is Inorganic pyrophosphatase.